Consider the following 104-residue polypeptide: Large ribosomal subunit protein uL24 (104 aa).

The protein belongs to the universal ribosomal protein uL24 family. Part of the 50S ribosomal subunit.

Functionally, one of two assembly initiator proteins, it binds directly to the 5'-end of the 23S rRNA, where it nucleates assembly of the 50S subunit. One of the proteins that surrounds the polypeptide exit tunnel on the outside of the subunit. This is Large ribosomal subunit protein uL24 from Hydrogenovibrio crunogenus (strain DSM 25203 / XCL-2) (Thiomicrospira crunogena).